The chain runs to 27 residues: Protein YqfI (27 aa).

The chain is Protein YqfI from Escherichia coli (strain K12).